Consider the following 756-residue polypeptide: 1,4-alpha-glucan branching enzyme GlgB (756 aa).

The active-site Nucleophile is D425. E478 serves as the catalytic Proton donor.

The protein belongs to the glycosyl hydrolase 13 family. GlgB subfamily. As to quaternary structure, monomer.

It carries out the reaction Transfers a segment of a (1-&gt;4)-alpha-D-glucan chain to a primary hydroxy group in a similar glucan chain.. Its pathway is glycan biosynthesis; glycogen biosynthesis. Catalyzes the formation of the alpha-1,6-glucosidic linkages in glycogen by scission of a 1,4-alpha-linked oligosaccharide from growing alpha-1,4-glucan chains and the subsequent attachment of the oligosaccharide to the alpha-1,6 position. The polypeptide is 1,4-alpha-glucan branching enzyme GlgB (Cupriavidus necator (strain ATCC 17699 / DSM 428 / KCTC 22496 / NCIMB 10442 / H16 / Stanier 337) (Ralstonia eutropha)).